We begin with the raw amino-acid sequence, 310 residues long: Tyrosine recombinase XerC (310 aa).

The Core-binding (CB) domain occupies Ser22 to Val103. Residues Asn124 to Arg304 form the Tyr recombinase domain. Active-site residues include Arg165, Lys189, His256, Arg259, and His282. Residue Tyr291 is the O-(3'-phospho-DNA)-tyrosine intermediate of the active site.

The protein belongs to the 'phage' integrase family. XerC subfamily. As to quaternary structure, forms a cyclic heterotetrameric complex composed of two molecules of XerC and two molecules of XerD.

It is found in the cytoplasm. Its function is as follows. Site-specific tyrosine recombinase, which acts by catalyzing the cutting and rejoining of the recombining DNA molecules. The XerC-XerD complex is essential to convert dimers of the bacterial chromosome into monomers to permit their segregation at cell division. It also contributes to the segregational stability of plasmids. In Corynebacterium efficiens (strain DSM 44549 / YS-314 / AJ 12310 / JCM 11189 / NBRC 100395), this protein is Tyrosine recombinase XerC.